Here is a 435-residue protein sequence, read N- to C-terminus: MKVYKGEVNALPPDKSIAHRAALIGAVADGTTEISNFSGGFDNQSTLGVLQACGIAVHQEKLKGPNGLISRNVVIHAQGFWSLSRPEKDLMCNNSGSTMRMFAGILAAQPFESRLAGDSSLMKRPMQRVAHPLRLMGADVALSSDNTAPVAIRGTTHLRPIDYELPVPSAQVKSLVALAALHAEGESRVIETLPSRNHTELMLGLKVEALSDGRSAVIIPGRKTVPAKPFHIPGDPSAACFIIALGLLSAGSEIVVRDVCLNPTRTGYMGVLLGAGAEISMENIRFAGGEKIGDVLVRHSPSMKPLSISDPAVVANSIDEIPMLAVLSACATGAFELYNAAELRAKESDRISAVVDNLERIGFVCDEYADGFAVTGRKDVTPTGKVAIDSYDDHRIAMSFAIADRVVPMELDISDAKVIGVSFPDFFEIIESLAT.

3-phosphoshikimate-binding residues include K15, S16, and R20. K15 is a binding site for phosphoenolpyruvate. Positions 96 and 124 each coordinate phosphoenolpyruvate. 3-phosphoshikimate is bound by residues S169, Q171, S195, D319, and K346. Q171 serves as a coordination point for phosphoenolpyruvate. D319 serves as the catalytic Proton acceptor. R350 and R395 together coordinate phosphoenolpyruvate.

The protein belongs to the EPSP synthase family. As to quaternary structure, monomer.

It is found in the cytoplasm. It carries out the reaction 3-phosphoshikimate + phosphoenolpyruvate = 5-O-(1-carboxyvinyl)-3-phosphoshikimate + phosphate. Its pathway is metabolic intermediate biosynthesis; chorismate biosynthesis; chorismate from D-erythrose 4-phosphate and phosphoenolpyruvate: step 6/7. Functionally, catalyzes the transfer of the enolpyruvyl moiety of phosphoenolpyruvate (PEP) to the 5-hydroxyl of shikimate-3-phosphate (S3P) to produce enolpyruvyl shikimate-3-phosphate and inorganic phosphate. In Chlorobium phaeobacteroides (strain BS1), this protein is 3-phosphoshikimate 1-carboxyvinyltransferase.